A 3750-amino-acid polypeptide reads, in one-letter code: MEGAARSRLLLCWTLLAIITDTWPIAEGFVNSPKIISKDGNLIFESGANRNISFRLSGNSRLTINEELDVMELLLATSGSKKRSGGKDDDFVDARELADQLADFNRRAFGANGLSAMLRVQQNRTRGSMALLRRFQTRLRALENRVDRMKTDLEANSCASGPCENGGTCYNTYTGFRCQCRSAFEGTKCEMDVNECALYEGTDLGCQNGGQCQNHFGTYSCLCQPGWHGMHCTQRKADCSQSSAWELCGHGSCVPSADDAGYRCICEPGWKTNGLTPICGEDVDECSDSAAHKPCSTSCINLPGSFTCAPCPAGLTGNGVSCRDLDECQTNNGGCSLSPKVDCINTYGSYHCGECPVGWTGDGRKCERSPQDIDIPAGQTPRTCPAGNNPCYPTASCFLISGTTSCRCPMGMVGTGYGPNGCVNGTTTNCKENPCLNGGICLFAGPSNYTCLCPIGFRPPICEPQPSPCDQHPCKNGGRCRPTTSGDLFVCQCLPGYRGRLCETRFSSCNGMLSAQSGRLRYPPEGTGYEHNAQCAWVIRTNESLVVNVTFNSFDVEDSTECRFDWLQINDGRSAAAQIIGRYCGNHLPHGGNIVSSGNQLYLWFRSDNSTAKEGFDLTWNSMEPQCGGRLNFETHGTLASPGSPGNYPKNRDCRWQLVAPTTKRIKLTFFSLQLEQHANCNFDYVLIKDSISGRELAKYCTTGAPAPLLLPTHLAEIHFHSDAEGSDTGFQLHYSVEERVPGCGGVYTAKEGTISESSTANTEPGGVSCEYEIHLAVGEQVVIQFARLELDPLDCLEVLDITDEGGSILQEKICGSDASRLNPPTFTSEFNRLKIKFYARAGSFQLNYRMACDYKLNNEQGTITSPGYPNLTRSDRICTYTISTATNTVISLKRIDFQLTNGESDDDDNDECLTTNLRINDGLNRKILGPYCGKNQPEENFVSETNYLQLHLSTDVDSMGRGFKFEYRALATGNDKCGGVHTRSGDHIRLPVHDDSYAGEATCYWVIMAPANKAIRLHWNSFSLENAVDCIYDYLEIYDSLGAQVNDERSKPLAKYCGNSVPEDLLSHSRQLVLKFVSDYSESDGGFDLTYTFEDRAKCGGHIHASSGELTSPEYPANYSAGLDCDWHLTGTIDHLLEIQVENFELEQSPNCSADYLEVRNGGGTDSPLIGRFCGRDIPARIPGFSHEMRLILHTDSAINGRGFRLRWRIFAFGCGGSLRSNMGAISSPRYPNSYPNMAHCEWRISLHPGSGISLLIEDLELEGLSNCYYDSVKIYTGIKLPNQSPCKVLCKDDDLHNPLIQLENNKGTIVFDSDASNTFRGFRISYKANCIRNLTATTGTIESLNYMEPFWETIPINCSWTIRAPKGNRVLVEVSHLARHEQHVPTATMPGGLYIVDGRNVQEIVTPQAMNISGEVLTVVHNASNVNFQLDYRIDGCMEELRGTFGFFQSPNYPKMYPNNLECYWLITVEQDSAIELTINNIDLEDSPNCTKDALTVSNHKNSVEVHERHCGSTTKLVITSSGHRLHVRFISDNSHNGLGFEATYRTVKATCGGKLTARNGVIESPNYPLNYPAHSRCEWQVEVSQHHQIVFEMADLNLESGYDCNWDYLEAYDLTEDDTEGERLFKVCGDETEDDKLLSSSSNMAVVRFISDDSVSKKGFRLHFHESCGQTIIVDETMFDYIQMSRQAARNESCLWVFQAVEPNKRIIFTPTHVKLREDANQQYPTEGDCLNVGVKIYEGTEPQGTPRLKFCRSHPPALISNGQALTVSVPLQLVEEFQGHYMTMDTSCGSIYNALSGKFTSPYYPASYPPNIECLWLLEASMGNSLSLTLESMDLEKSESCNRDYLEVREESESGQLIGVYCGNEVPGVIHSRGAIWMKFKSDDDNVGEGFMASYNYEHHNELNGTEGTIESPHFPSKFQDPVPYSWRITVDKEYVVAISLLYLRDLDQPHLNFYDGYSDIGARIEVTDPDETIISSTNVVYFTSNRGPFKLNWNRLSKEALRSNRTAEERTRQCGNQLITIDRSVIGFHSPGYPNGYEQDLNCFWTLVPSNPAMHAVLTLSQIDLEIFSEDCIADYVKIFSGSDLQNWSELRTLCSLPTESSDRVFHGRPYLRVEFVTDPSVNKTGFNGIVRTACGSEITASKGLVNITEILKVLPRPNHDCVWTIKVRQGRRIKIDFPDFQLQNNMASGSSDCRNYLLLRNGNDEDSPFLGRGKYCEDVVHEVLNTSSNKAYIKFHFASPPRFLVSFRFEELRYTDSGRIRLSASGDEQFISSPYYPHLPHPHSECIWIVEAPPEHRIMLHFQGAFDMLDATGEPEECQREFVLINDGSTELRPEIGRYCGNRKPDTIYSTGNQMRIRYFTDVSEPHMGFNASLSVARCGGSFHSPEGVIASPSRDLLLIHEEGKQLQECVYTIELEKGSTIDLTSEYLQIPTLRNGSCSQRNHLMLEEMDAFGLDGEEKIVDTLMLCGMEAKHLISETNKIVFRYRFLDGIPAENQGFRLKYTSLGSRCGETIYASVGVLQTPGYPLGVPHPMHCKWQVQVPKGRRVRLEILDFNTGTNMDLRGRLGFRGRLTVANDFKMQSILGRYNVDPPAEVLSSDNTMGIDAFLLPIVQNHGIKLRFSAYGSSSCPGFTVMMNEVADIQFQRFNISRPLHCSYKVVPPSNSTLLIRVKEYNTTSVMMWNTHMCALLSPLKFNRLEQEEELMERILCDYQSPAPGKPLPSIRLPFPIQLVVSASARNAMTNLVLSYSTQSCGGVIILEPGDNMTVHQPSGMVSAAGAIDCAWAIGPYTDASGEDEVLVPQDIQLEVSVYNVNLPAPSPSAQSPEAPCLHHYLKVYNGPDQNSPSLGLFCNQATAVNMVVERGLFLEYHSDSFSANATFNVSIKYGSGCGGKLVYPYRAIDFAEQYKNNVECIWEVEATMGYHIGLTFQGRFYIEDSPGCTKDYLLVQQRNETTGNWTDLQRICGRVAPEMINTTSPYLRLIFRSDGDVVADGFLAKFERNCGGLLYADSTEQELASPGFPNGYEKYLQCNWTIVPRSPSMGGVLVSFVNFDLEQGPISVCLYDNLTVTTKDKGKDPQQTTLCGVKHNHEYRGKEYVNLLLRTDGSYSGRGFTLLYTSRLCGGIISRTSMVESPVQHTDNTLPPGSDCYWNLTAPAGYKFNIKFLFIDFEANSNCAYDGVEVFSGPIPDERYRWGRFCGRINEDLPLISIPQERGIIHSFSDDRDPSRGFRALVRVMPNCDEKISLNGSSRYVYSKFNNAGGYQNDLDCQIVFRVNPDQQISVEFSNFHVQDTDGCRSDYVELRDGGGTFADIIGRFCGQNQPPTLRTTRHTLYMRFVTDNKVTDTGFQVTINAIPRLCGSSEITLSADGTKEVTINSPARTPGGNYPNGVSCFWKIKGDSLLRVQFVNFDLHGPNQNGSCVDDYLKIYNSEDAPLLEQGLGTDLVFNGQTSSKNGFGFATEHVYCGNVKPDIYYGRSSEVYLKFRSKGLEQHGGFQLQVALNSNRERHYDGLQGRVHLSQSADCNIIIRAPPNYTLSLYYTELIFGTYDCEMENLEVFDRTNRSLQRVCSFVDMGKSLFSNANELRLQMKTGSYLTSLDLTYLASPVEKGPGCGGQFYNTEGIFSNPFYPNNVRNNSECQWIVRVPSNNVVFLTFEVFNLGSKTTCHTDYLQILEQDATGEEREMRRFCGEDNPKYYKSRRSQVLVRFHKTVNYDGIGWVIRFAGVYSDHQIPRHLLGGS.

The N-terminal stretch at 1–28 is a signal peptide; sequence MEGAARSRLLLCWTLLAIITDTWPIAEG. N-linked (GlcNAc...) asparagine glycans are attached at residues N51 and N123. The 37-residue stretch at 154 to 190 folds into the EGF-like 1 domain; sequence EANSCASGPCENGGTCYNTYTGFRCQCRSAFEGTKCE. 6 disulfides stabilise this stretch: C158–C169, C163–C178, C180–C189, C196–C212, C206–C221, and C223–C232. Positions 192-233 constitute an EGF-like 2; calcium-binding domain; the sequence is DVNECALYEGTDLGCQNGGQCQNHFGTYSCLCQPGWHGMHCT. Positions 282–308 constitute an EGF-like 3; calcium-binding domain; that stretch reads DVDECSDSAAHKPCSTSCINLPGSFTC. The region spanning 324-352 is the EGF-like 4; calcium-binding domain; that stretch reads DLDECQTNNGGCSLSPKVDCINTYGSYHC. N424 is a glycosylation site (N-linked (GlcNAc...) asparagine). EGF-like domains follow at residues 426 to 463 and 465 to 503; these read TTTNCKENPCLNGGICLFAGPSNYTCLCPIGFRPPICE and QPSPCDQHPCKNGGRCRPTTSGDLFVCQCLPGYRGRLCE. Disulfide bonds link C430/C441, C435/C451, C453/C462, C469/C480, C474/C491, C493/C502, and C509/C535. N448 is a glycosylation site (N-linked (GlcNAc...) asparagine). 13 consecutive CUB domains span residues 509–623, 627–738, 744–852, 853–971, 978–1095, 1100–1212, 1216–1331, 1332–1434, 1439–1550, 1554–1670, 1671–1788, 1792–1902, and 1903–2001; these read CNGM…WNSM, CGGR…YSVE, CGGV…YRMA, CDYK…YRAL, CGGV…YTFE, CGGH…WRIF, CGGS…YKAN, CIRN…QLDY, CMEE…YRTV, CGGK…FHES, CGQT…YMTM, CGSI…YNYE, and HHNE…WNRL. N542 and N548 each carry an N-linked (GlcNAc...) asparagine glycan. The cysteines at positions 562 and 584 are disulfide-linked. A glycan (N-linked (GlcNAc...) asparagine) is linked at N609. Intrachain disulfides connect C627/C654, C681/C701, C744/C770, C853/C879, C913/C933, and C978/C1004. N-linked (GlcNAc...) asparagine glycosylation occurs at N871. Residues E1026, D1034, and D1080 each contribute to the Ca(2+) site. C1031 and C1058 are oxidised to a cystine. An intrachain disulfide couples C1100 to C1126. N1119 carries an N-linked (GlcNAc...) asparagine glycan. E1148 provides a ligand contact to Ca(2+). An N-linked (GlcNAc...) asparagine glycan is attached at N1152. C1153 and C1175 are disulfide-bonded. Ca(2+)-binding residues include D1156 and D1197. A disulfide bridge links C1216 with C1242. 3 residues coordinate Ca(2+): E1264, D1272, and D1316. Cysteines 1269 and 1292 form a disulfide. A disulfide bridge connects residues C1332 and C1360. N-linked (GlcNAc...) asparagine glycosylation is found at N1335, N1359, N1413, and N1424. The cysteines at positions 1439 and 1465 are disulfide-linked. The N-linked (GlcNAc...) asparagine glycan is linked to N1491. Disulfide bonds link C1492–C1513, C1554–C1580, C1607–C1631, C1671–C1697, C1733–C1755, C1792–C1818, and C1845–C1866. Residue N1694 is glycosylated (N-linked (GlcNAc...) asparagine). N-linked (GlcNAc...) asparagine glycans are attached at residues N1908 and N2009. 2 disulfide bridges follow: C2019/C2048 and C2077/C2100. CUB domains follow at residues 2019 to 2139, 2140 to 2256, 2262 to 2383, 2385 to 2512, and 2516 to 2646; these read CGNQ…VRTA, CGSE…FRFE, DSGR…LSVA, CGGS…YTSL, and CGET…MNEV. N2092, N2128, N2152, and N2231 each carry an N-linked (GlcNAc...) asparagine glycan. The cysteines at positions 2140 and 2167 are disulfide-linked. A disulfide bridge links C2324 with C2346. Residue N2377 is glycosylated (N-linked (GlcNAc...) asparagine). Residues C2385 and C2416 are joined by a disulfide bond. N-linked (GlcNAc...) asparagine glycosylation is present at N2442. 2 disulfide bridges follow: C2445–C2474 and C2516–C2542. N2655, N2671, N2682, and N2772 each carry an N-linked (GlcNAc...) asparagine glycan. 2 cysteine pairs are disulfide-bonded: C2761-C2790 and C2837-C2859. 8 consecutive CUB domains span residues 2761–2895, 2898–3010, 3011–3128, 3130–3246, 3249–3364, 3368–3512, 3522–3615, and 3623–3736; these read CGGV…IKYG, CGGK…FERN, CGGL…YTSR, CGGI…VRVM, CDEK…INAI, CGSS…VALN, LQGR…YLAS, and CGGQ…FAGV. 2 N-linked (GlcNAc...) asparagine glycosylation sites follow: N2885 and N2889. 2 cysteine pairs are disulfide-bonded: C2898–C2921 and C2949–C2973. N2960, N2965, and N2982 each carry an N-linked (GlcNAc...) asparagine glycan. A disulfide bridge links C3011 with C3039. N-linked (GlcNAc...) asparagine glycans are attached at residues N3040 and N3074. 2 disulfides stabilise this stretch: C3070–C3092 and C3130–C3157. A glycan (N-linked (GlcNAc...) asparagine) is linked at N3160. 4 disulfide bridges follow: C3184/C3207, C3249/C3278, C3305/C3327, and C3368/C3402. N3256 carries an N-linked (GlcNAc...) asparagine glycan. A glycan (N-linked (GlcNAc...) asparagine) is linked at N3427. Residues C3430 and C3475 are joined by a disulfide bond. Residues N3543, N3572, and N3645 are each glycosylated (N-linked (GlcNAc...) asparagine). Cystine bridges form between C3560–C3579, C3623–C3649, and C3676–C3699.

In terms of tissue distribution, specifically expressed in nephrocytes.

The protein localises to the cell membrane. In terms of biological role, required in the nephrocyte for normal uptake of proteins and elimination of toxins, and for maintenance of endocytic trafficking structures. May function together with Amnionless. In Drosophila melanogaster (Fruit fly), this protein is Cubilin homolog.